The following is a 188-amino-acid chain: MGVDIRHNKDRKVHRTEPKSQDIYLRLLVKLYRFLARRSDAPFNKVVLKRLFMSKTNRPPLALSRLIRKMKLQGRENKIAVVVGTITDDVRILNIPKLKVCALRVTAGARRRILKAGGQVMTFDQLAVTTPKGQGTVLLSGPRKAREVYRHFGKAPGTPHSHTKPYIRSKGRKFERARGRRASRGYKN.

The segment at 153–188 (GKAPGTPHSHTKPYIRSKGRKFERARGRRASRGYKN) is disordered. Composition is skewed to basic residues over residues 161-171 (SHTKPYIRSKG) and 178-188 (RGRRASRGYKN).

It belongs to the eukaryotic ribosomal protein eL18 family. Component of the large ribosomal subunit.

The protein localises to the cytoplasm. The protein resides in the cytosol. It localises to the rough endoplasmic reticulum. In terms of biological role, component of the large ribosomal subunit. The ribosome is a large ribonucleoprotein complex responsible for the synthesis of proteins in the cell. The polypeptide is Large ribosomal subunit protein eL18 (rpl18) (Ictalurus punctatus (Channel catfish)).